Reading from the N-terminus, the 548-residue chain is Chaperonin GroEL (548 aa).

ATP contacts are provided by residues 30–33, Lys-51, 87–91, Gly-415, 479–481, and Asp-495; these read TLGP, DGTTT, and NAA. The segment at 524–548 is disordered; that stretch reads LPKEDKSSDSNSSPAGGMGGMGGMM. A compositionally biased stretch (gly residues) spans 539–548; the sequence is GGMGGMGGMM.

This sequence belongs to the chaperonin (HSP60) family. Forms a cylinder of 14 subunits composed of two heptameric rings stacked back-to-back. Interacts with the co-chaperonin GroES.

The protein localises to the cytoplasm. The enzyme catalyses ATP + H2O + a folded polypeptide = ADP + phosphate + an unfolded polypeptide.. Functionally, together with its co-chaperonin GroES, plays an essential role in assisting protein folding. The GroEL-GroES system forms a nano-cage that allows encapsulation of the non-native substrate proteins and provides a physical environment optimized to promote and accelerate protein folding. This Buchnera aphidicola subsp. Myzus persicae (Myzus persicae primary endosymbiont) protein is Chaperonin GroEL.